The sequence spans 135 residues: MSLIVYFSSRSGNTHRFVERLGVRSSRIPLEASGALQVREPFVLVTPTYGGGSTKGAVPNPVIRFLNDADNRALIRGVIAAGNSNFGEAFCIAGNIISAKCGVPYLYRFELLGTAEDVGNVRNGMEQFWTRQTQA.

The protein belongs to the NrdI family.

In terms of biological role, probably involved in ribonucleotide reductase function. The chain is Protein NrdI from Brucella abortus (strain S19).